The sequence spans 287 residues: Nucleotide-binding protein HD_0584 (287 aa).

Residue 8–15 coordinates ATP; the sequence is GRSGSGKS. 56–59 contacts GTP; the sequence is DIRN.

Belongs to the RapZ-like family.

Its function is as follows. Displays ATPase and GTPase activities. The protein is Nucleotide-binding protein HD_0584 of Haemophilus ducreyi (strain 35000HP / ATCC 700724).